A 529-amino-acid polypeptide reads, in one-letter code: BTB/POZ domain-containing protein 6 (529 aa).

One can recognise a BTB domain in the interval 127–197; the sequence is ADVHFIVGPA…LYSDEIDLEA (71 aa).

In terms of assembly, homodimer and heterodimer. Interacts with cul3 via the BTB domain.

The protein resides in the cytoplasm. Adapter protein for the cul3 E3 ubiquitin-protein ligase complex. Involved in late neuronal development and muscle formation. The chain is BTB/POZ domain-containing protein 6 (btbd6) from Xenopus tropicalis (Western clawed frog).